The sequence spans 208 residues: Outer-membrane lipoprotein carrier protein (208 aa).

Positions 1 to 23 (MKKTVKNLTALLTLALAAPWALA) are cleaved as a signal peptide.

It belongs to the LolA family. In terms of assembly, monomer.

Its subcellular location is the periplasm. Functionally, participates in the translocation of lipoproteins from the inner membrane to the outer membrane. Only forms a complex with a lipoprotein if the residue after the N-terminal Cys is not an aspartate (The Asp acts as a targeting signal to indicate that the lipoprotein should stay in the inner membrane). This Actinobacillus succinogenes (strain ATCC 55618 / DSM 22257 / CCUG 43843 / 130Z) protein is Outer-membrane lipoprotein carrier protein.